The primary structure comprises 32 residues: Photosystem I reaction center subunit XII (32 aa).

The helical transmembrane segment at 10-27 (VVALISALVTGILALRLG) threads the bilayer.

Belongs to the PsaM family.

It localises to the plastid. Its subcellular location is the chloroplast thylakoid membrane. In Zygnema circumcarinatum (Green alga), this protein is Photosystem I reaction center subunit XII.